A 621-amino-acid polypeptide reads, in one-letter code: SH2B adapter protein 2 (621 aa).

The residue at position 47 (tyrosine 47) is a Phosphotyrosine. Serine 130 carries the phosphoserine modification. Positions 144–165 are disordered; it reads RASPEPEGGATPKTTEPVSEPR. The region spanning 186–299 is the PH domain; it reads DIQREGALRF…WVADIQGCVD (114 aa). Serine 303 is subject to Phosphoserine. The SH2 domain maps to 409–507; that stretch reads WFHGTLSRVK…SADITLRSYV (99 aa). Disordered stretches follow at residues 507-528 and 548-609; these read VRAQ…PVPA and PPTS…ATLG. Positions 552–570 are enriched in low complexity; that stretch reads PSNGAGASSSSGSSSSATS. Position 597 is a phosphoserine (serine 597). The residue at position 618 (tyrosine 618) is a Phosphotyrosine.

The protein belongs to the SH2B adapter family. In terms of assembly, homodimer. Interacts with KIT/c-KIT, SHC1, EPOR, PDGFR, VAV1 and VAV3. Interacts (via N-terminal region) with SHC1. Interacts (via the phosphorylated C-terminus) with GRB2. Interacts (via its SH2 domain) with EPOR, INSR and KIT. Interacts with GRB2 after B-cell antigen receptor stimulation. Interacts (via PH domain) with VAV3. Interacts with NTRK1, NTRK2 and NTRK3 (phosphorylated); after stimulation of the receptor by its extracellular ligand and subsequent autophosphorylation of the receptor. Binds INSR, GRB2, ASB6 and CAP. Insulin stimulation leads to dissociation of CAP. Binds CBS only when SH2B2/APS has become phosphorylated. INSR binding does not depend on the phosphorylation of SH2B2/APS. In terms of processing, phosphorylated on a tyrosine residue by NTRK1, NTRK2, NTRK3 and INSR after stimulation of the receptor by its extracellular ligand. Tyrosine phosphorylated by JAK2, KIT and other kinases activated by B-cell receptor in response to stimulation with cytokines, IL3, IL5, PDGF, IGF1, IGF2, CSF2/GM-CSF and cross-linking of the B-cell receptor complex. In terms of tissue distribution, detected in embryonic brain, spinal cord and cortical neurons.

The protein resides in the cytoplasm. It is found in the membrane. Its function is as follows. Adapter protein for several members of the tyrosine kinase receptor family. Involved in multiple signaling pathways. Binds to EPOR and suppresses EPO-induced STAT5 activation, possibly through a masking effect on STAT5 docking sites in EPOR. Suppresses PDGF-induced mitogenesis. Involved in stimulation of glucose uptake by insulin. Involved in coupling from immunoreceptor to Ras signaling. Acts as a negative regulator of cytokine signaling in collaboration with CBL. Induces cytoskeletal reorganization and neurite outgrowth in cultured neurons. The polypeptide is SH2B adapter protein 2 (Sh2b2) (Rattus norvegicus (Rat)).